The chain runs to 450 residues: Flavin-containing monooxygenase FMO GS-OX-like 5 (450 aa).

17-22 (GAGPAG) lines the FAD pocket. 215 to 220 (GNSSSA) is an NADP(+) binding site.

Belongs to the FMO family. It depends on FAD as a cofactor.

Catalyzes the conversion of methylthioalkyl glucosinolates of any chain length into methylsulfinylalkyl glucosinolates. The protein is Flavin-containing monooxygenase FMO GS-OX-like 5 of Arabidopsis thaliana (Mouse-ear cress).